We begin with the raw amino-acid sequence, 311 residues long: Very-long-chain 3-oxoacyl-CoA reductase-B (311 aa).

A helical transmembrane segment spans residues 8–28; the sequence is LFWVGAVTVLWLSVSSLWSLI. 48-77 lines the NADP(+) pocket; that stretch reads GKWAVVTGATDGIGKAYAEELARRGFAIVL. A helical transmembrane segment spans residues 125 to 145; it reads IGVLVNNVGVSYSYPEFFLNI. Ser187 provides a ligand contact to substrate. Tyr200 (proton acceptor) is an active-site residue. Residues 269 to 289 traverse the membrane as a helical segment; that stretch reads GYLPHAIMGWVTASLLPAKLL.

This sequence belongs to the short-chain dehydrogenases/reductases (SDR) family. 17-beta-HSD 3 subfamily.

It is found in the endoplasmic reticulum membrane. It catalyses the reaction a very-long-chain (3R)-3-hydroxyacyl-CoA + NADP(+) = a very-long-chain 3-oxoacyl-CoA + NADPH + H(+). It carries out the reaction 17beta-estradiol + NAD(+) = estrone + NADH + H(+). The catalysed reaction is 17beta-estradiol + NADP(+) = estrone + NADPH + H(+). It functions in the pathway lipid metabolism; fatty acid biosynthesis. Its pathway is steroid biosynthesis; estrogen biosynthesis. Functionally, catalyzes the second of the four reactions of the long-chain fatty acids elongation cycle. This endoplasmic reticulum-bound enzymatic process, allows the addition of two carbons to the chain of long- and very long-chain fatty acids/VLCFAs per cycle. This enzyme has a 3-ketoacyl-CoA reductase activity, reducing 3-ketoacyl-CoA to 3-hydroxyacyl-CoA, within each cycle of fatty acid elongation. Thereby, it may participate in the production of VLCFAs of different chain lengths that are involved in multiple biological processes as precursors of membrane lipids and lipid mediators. May also catalyze the transformation of estrone (E1) into estradiol (E2) and play a role in estrogen formation. This chain is Very-long-chain 3-oxoacyl-CoA reductase-B (hsd17b12b), found in Danio rerio (Zebrafish).